The primary structure comprises 151 residues: Large ribosomal subunit protein bL9 (151 aa).

It belongs to the bacterial ribosomal protein bL9 family.

Binds to the 23S rRNA. This chain is Large ribosomal subunit protein bL9, found in Lactobacillus acidophilus (strain ATCC 700396 / NCK56 / N2 / NCFM).